A 244-amino-acid polypeptide reads, in one-letter code: MRGIFFLILILNFIGLIFSVAEDCALSKREDRCGSIFEDLTNCYNSTFKMMLGDCLVTCNACESYTCNNPQPDTTLNCTALAGECNSALFSELMKEKCPATCGKCNRKNANLCSDKSKPDICVNLKTLCNSVEFYDKLSEQCPSTCNRCPHNGTNPENKTGGNGGTGTQECTDLANDCSYNQNRCSVKEYSSLMHRLCPKTCNACNICEDANKMCPIWVPRGFCSKFDHDKVQKSCAKSCNICK.

A signal peptide spans 1-19; sequence MRGIFFLILILNFIGLIFS. Asn-45 and Asn-77 each carry an N-linked (GlcNAc...) asparagine glycan. 2 consecutive ShKT domains span residues 67-105 and 113-149; these read CNNP…CGKC and CSDK…CNRC. 3 disulfide bridges follow: Cys-113-Cys-149, Cys-122-Cys-142, and Cys-129-Cys-146. N-linked (GlcNAc...) asparagine glycosylation is found at Asn-152 and Asn-158. 2 ShKT domains span residues 171-205 and 208-243; these read CTDL…CNAC and CEDA…CNIC. 6 cysteine pairs are disulfide-bonded: Cys-171–Cys-205, Cys-178–Cys-198, Cys-185–Cys-202, Cys-208–Cys-243, Cys-215–Cys-236, and Cys-224–Cys-240.

This is an uncharacterized protein from Caenorhabditis elegans.